A 426-amino-acid polypeptide reads, in one-letter code: D-tagatose-1,6-bisphosphate aldolase subunit KbaZ (426 aa).

This sequence belongs to the GatZ/KbaZ family. KbaZ subfamily. In terms of assembly, forms a complex with KbaY.

The protein operates within carbohydrate metabolism; D-tagatose 6-phosphate degradation; D-glyceraldehyde 3-phosphate and glycerone phosphate from D-tagatose 6-phosphate: step 2/2. Its function is as follows. Component of the tagatose-1,6-bisphosphate aldolase KbaYZ that is required for full activity and stability of the Y subunit. Could have a chaperone-like function for the proper and stable folding of KbaY. When expressed alone, KbaZ does not show any aldolase activity. The protein is D-tagatose-1,6-bisphosphate aldolase subunit KbaZ of Escherichia coli (strain ATCC 8739 / DSM 1576 / NBRC 3972 / NCIMB 8545 / WDCM 00012 / Crooks).